The chain runs to 140 residues: ATP synthase epsilon chain (140 aa).

It belongs to the ATPase epsilon chain family. In terms of assembly, F-type ATPases have 2 components, CF(1) - the catalytic core - and CF(0) - the membrane proton channel. CF(1) has five subunits: alpha(3), beta(3), gamma(1), delta(1), epsilon(1). CF(0) has three main subunits: a, b and c.

The protein resides in the cell inner membrane. Produces ATP from ADP in the presence of a proton gradient across the membrane. In Janthinobacterium sp. (strain Marseille) (Minibacterium massiliensis), this protein is ATP synthase epsilon chain.